Consider the following 345-residue polypeptide: Phosphate import ATP-binding protein PstB 2 (345 aa).

The segment at 1–57 is disordered; sequence MSDTPQSEPRRSDDRSGADDATAAAAGSTDAAAAAVSSKTGGIAGPPGGPGEVDGDE. Residues 8-18 are compositionally biased toward basic and acidic residues; that stretch reads EPRRSDDRSGA. Over residues 19-35 the composition is skewed to low complexity; that stretch reads DDATAAAAGSTDAAAAA. A compositionally biased stretch (gly residues) spans 42-52; that stretch reads GIAGPPGGPGE. The 255-residue stretch at 86-340 folds into the ABC transporter domain; it reads VSVSDLDTYY…PQSQRVEDYV (255 aa). Residue 118–125 participates in ATP binding; the sequence is GPSGCGKS.

The protein belongs to the ABC transporter superfamily. Phosphate importer (TC 3.A.1.7) family. The complex is composed of two ATP-binding proteins (PstB), two transmembrane proteins (PstC and PstA) and a solute-binding protein (PstS).

It localises to the cell membrane. The enzyme catalyses phosphate(out) + ATP + H2O = ADP + 2 phosphate(in) + H(+). Part of the ABC transporter complex PstSACB involved in phosphate import. Responsible for energy coupling to the transport system. This Halobacterium salinarum (strain ATCC 700922 / JCM 11081 / NRC-1) (Halobacterium halobium) protein is Phosphate import ATP-binding protein PstB 2.